Here is a 27-residue protein sequence, read N- to C-terminus: Carcinustatin-20 (27 aa).

Leu27 carries the leucine amide modification.

Belongs to the allatostatin family.

It is found in the secreted. In terms of biological role, may act as a neurotransmitter or neuromodulator. This is Carcinustatin-20 from Carcinus maenas (Common shore crab).